Reading from the N-terminus, the 701-residue chain is MAQKDVLTDLNKVRNIGIMAHIDAGKTTTTERILYYTGVNYKIGETHDGASTTDWMEQEQERGITITSAAVTCFWNDNQINIIDTPGHVDFTVEVERSLRVLDGAVAVFDGKEGVEPQSEQVWRQADKYDVPRICFVNKMDKLGADFYFTVRTIEERLGATPLVIQLPIGAENDFIGIIDLVEMKAKVWRGETALGEKYEVEDIPAELADKADEYRTKLLEAVAETDEALLEKYFGGEELTVEEIKGAIRKLTVNSELYPVLCGSAFKNKGVQPMLDAVVDYLPSPLDVESVQGHVPNKEDELITRKPSVDEPFSALAFKIAVHPFFGKLTYVRVYSGTVESGSQVINSTKGKKERLGKLFQMHANKENPVERASAGHIYAVIGLKDTTTGDTLSDANQQIVLESMTFPDPVIEVAIEPKTKSDQEKLGTAIQKLAEEDPTFKVHLDQETGQTVIGGMGELHLDILVDRMRREFKVEANVGKPQVAYRETIKRKVEKVEFTHKKQTGGSGQFAKVLIDLEPFSGEDGATYEFENKVTGGRIPREYIPSVDAGAQDAMQYGVLAGYPLVNVKVTLLDGAYHEVDSSEMAFKVAGSQVLKKAAQAAQPVILEPIMAVEVTTPEDYMGEVIGDLNSRRGQIQAMEERAGARVVKAQVPLSEMFGYVGDLRSKTQGRANYSMVFDSYAEVPANVSKEIIAKATGQ.

The region spanning 11-287 (NKVRNIGIMA…AVVDYLPSPL (277 aa)) is the tr-type G domain. GTP contacts are provided by residues 20-27 (AHIDAGKT), 84-88 (DTPGH), and 138-141 (NKMD).

The protein belongs to the TRAFAC class translation factor GTPase superfamily. Classic translation factor GTPase family. EF-G/EF-2 subfamily.

Its subcellular location is the cytoplasm. Functionally, catalyzes the GTP-dependent ribosomal translocation step during translation elongation. During this step, the ribosome changes from the pre-translocational (PRE) to the post-translocational (POST) state as the newly formed A-site-bound peptidyl-tRNA and P-site-bound deacylated tRNA move to the P and E sites, respectively. Catalyzes the coordinated movement of the two tRNA molecules, the mRNA and conformational changes in the ribosome. The chain is Elongation factor G from Mycobacterium sp. (strain JLS).